The chain runs to 826 residues: U-box domain-containing protein 4 (826 aa).

The stretch at 172–204 (RSNQEILIEAVALERQKEMAEQSENNAEVEFLD) forms a coiled coil. The 75-residue stretch at 229–303 (AILADFFCPL…ANWCETNDVK (75 aa)) folds into the U-box domain. The segment at 330-501 (GADVSARKVS…TRRDLSDFSP (172 aa)) is disordered. Polar residues predominate over residues 347 to 360 (ASSSETGKPSFSSR). Basic and acidic residues predominate over residues 391-414 (DARRGSLNDFEDRSNDSRELRTDA). Ser396 is subject to Phosphoserine. Over residues 416–428 (GRSSVSSTTRGSV) the composition is skewed to low complexity. Positions 492-501 (TRRDLSDFSP) are enriched in basic and acidic residues. ARM repeat units lie at residues 530-570 (NETR…LLAK), 573-612 (MDNRIVIGNSGAIVLLVELLYSTDSATQENAVTALLNLSI), 614-653 (DNNKKAIADAGAIEPLIHVLENGSSEAKENSAATLFSLSV), 655-694 (EENKIKIGQSGAIGPLVDLLGNGTPRGKKDAATALFNLSI), 696-734 (QENKAMIVQSGAVRYLIDLMDPAAGMVDKAVAVLANLAT), 736-775 (PEGRNAIGQEGGIPLLVEVVELGSARGKENAAAALLQLST), and 778-817 (GRFCNMVLQEGAVPPLVALSQSGTPRAREKAQALLSYFRN).

The catalysed reaction is S-ubiquitinyl-[E2 ubiquitin-conjugating enzyme]-L-cysteine + [acceptor protein]-L-lysine = [E2 ubiquitin-conjugating enzyme]-L-cysteine + N(6)-ubiquitinyl-[acceptor protein]-L-lysine.. The protein operates within protein modification; protein ubiquitination. Functionally, functions as an E3 ubiquitin ligase. The chain is U-box domain-containing protein 4 (PUB4) from Arabidopsis thaliana (Mouse-ear cress).